The chain runs to 167 residues: UPF0114 protein in repA1-repA2 intergenic region (167 aa).

3 consecutive transmembrane segments (helical) span residues L15–F35, L53–V73, and I136–I156.

Belongs to the UPF0114 family.

It localises to the cell membrane. The protein is UPF0114 protein in repA1-repA2 intergenic region of Buchnera aphidicola subsp. Diuraphis noxia.